We begin with the raw amino-acid sequence, 217 residues long: Somatotropin (217 aa).

Residues 1 to 26 (MATGSRTSLLLAFTLLCLPQLKEAGA) form the signal peptide. His44 provides a ligand contact to Zn(2+). Cys79 and Cys191 are disulfide-bonded. Ser132 carries the phosphoserine modification. Glu200 serves as a coordination point for Zn(2+). Cys208 and Cys215 are joined by a disulfide.

The protein belongs to the somatotropin/prolactin family.

The protein localises to the secreted. Its function is as follows. Plays an important role in growth control. Its major role in stimulating body growth is to stimulate the liver and other tissues to secrete IGF1. It stimulates both the differentiation and proliferation of myoblasts. It also stimulates amino acid uptake and protein synthesis in muscle and other tissues. The chain is Somatotropin (GH1) from Saimiri boliviensis boliviensis (Bolivian squirrel monkey).